Here is a 164-residue protein sequence, read N- to C-terminus: ATP synthase subunit b (164 aa).

The helical transmembrane segment at 6-26 (GELVGNFILVTGSVIVLLLLI) threads the bilayer.

It belongs to the ATPase B chain family. F-type ATPases have 2 components, F(1) - the catalytic core - and F(0) - the membrane proton channel. F(1) has five subunits: alpha(3), beta(3), gamma(1), delta(1), epsilon(1). F(0) has three main subunits: a(1), b(2) and c(10-14). The alpha and beta chains form an alternating ring which encloses part of the gamma chain. F(1) is attached to F(0) by a central stalk formed by the gamma and epsilon chains, while a peripheral stalk is formed by the delta and b chains.

The protein resides in the cell membrane. Functionally, f(1)F(0) ATP synthase produces ATP from ADP in the presence of a proton or sodium gradient. F-type ATPases consist of two structural domains, F(1) containing the extramembraneous catalytic core and F(0) containing the membrane proton channel, linked together by a central stalk and a peripheral stalk. During catalysis, ATP synthesis in the catalytic domain of F(1) is coupled via a rotary mechanism of the central stalk subunits to proton translocation. In terms of biological role, component of the F(0) channel, it forms part of the peripheral stalk, linking F(1) to F(0). This Streptococcus pyogenes serotype M1 protein is ATP synthase subunit b.